A 275-amino-acid polypeptide reads, in one-letter code: Probable ABC transporter permease protein PH1216 (275 aa).

6 helical membrane passes run 10-30 (LLYI…WSAI), 73-93 (IFTT…GFTI), 105-125 (LLAL…IPLV), 137-157 (ILGL…LLFT), 181-203 (IYTK…YQFT), and 241-261 (IQMA…IALG). The ABC transmembrane type-1 domain maps to 68-260 (ILNSLIFTTF…LPTLLIMIAL (193 aa)).

This sequence belongs to the binding-protein-dependent transport system permease family. MalFG subfamily.

It localises to the cell membrane. Functionally, probably part of a binding-protein-dependent transport system PH1214/15/16. Probably responsible for the translocation of the substrate across the membrane. This is Probable ABC transporter permease protein PH1216 from Pyrococcus horikoshii (strain ATCC 700860 / DSM 12428 / JCM 9974 / NBRC 100139 / OT-3).